Consider the following 153-residue polypeptide: Insulin-like growth factor 1 (153 aa).

Residues 49 to 77 (GPETLCGAELVDALQFVCGDRGFYFNKPT) are b. Disulfide bonds link cysteine 54/cysteine 96, cysteine 66/cysteine 109, and cysteine 95/cysteine 100. The tract at residues 78 to 89 (GYGSSSRRAPQT) is c. Residues 90–110 (GIVDECCFRSCDLRRLEMYCA) form an a region. The segment at 111-118 (PLKPAKSA) is d. The propeptide at 119–153 (RSVRAQRHTDMPKAQKEVHLKNASRGSAGNKNYRM) is e peptide. Residues 120-153 (SVRAQRHTDMPKAQKEVHLKNASRGSAGNKNYRM) form a disordered region. Basic and acidic residues predominate over residues 125–138 (RHTDMPKAQKEVHL). Polar residues predominate over residues 142–153 (SRGSAGNKNYRM).

It belongs to the insulin family. As to quaternary structure, forms a ternary complex with IGFR1 and ITGAV:ITGB3. Forms a ternary complex with IGFR1 and ITGA6:ITGB4. Forms a ternary complex with IGFBP3 and ALS.

It localises to the secreted. In terms of biological role, the insulin-like growth factors, isolated from plasma, are structurally and functionally related to insulin but have a much higher growth-promoting activity. May be a physiological regulator of [1-14C]-2-deoxy-D-glucose (2DG) transport and glycogen synthesis in osteoblasts. Stimulates glucose transport in bone-derived osteoblastic (PyMS) cells and is effective at much lower concentrations than insulin, not only regarding glycogen and DNA synthesis but also with regard to enhancing glucose uptake. May play a role in synapse maturation. Ca(2+)-dependent exocytosis of IGF1 is required for sensory perception of smell in the olfactory bulb. Acts as a ligand for IGF1R. Binds to the alpha subunit of IGF1R, leading to the activation of the intrinsic tyrosine kinase activity which autophosphorylates tyrosine residues in the beta subunit thus initiating a cascade of down-stream signaling events leading to activation of the PI3K-AKT/PKB and the Ras-MAPK pathways. Binds to integrins ITGAV:ITGB3 and ITGA6:ITGB4. Its binding to integrins and subsequent ternary complex formation with integrins and IGFR1 are essential for IGF1 signaling. Induces the phosphorylation and activation of IGFR1, MAPK3/ERK1, MAPK1/ERK2 and AKT1. As part of the MAPK/ERK signaling pathway, acts as a negative regulator of apoptosis in cardiomyocytes via promotion of STUB1/CHIP-mediated ubiquitination and degradation of ICER-type isoforms of CREM. The sequence is that of Insulin-like growth factor 1 from Canis lupus familiaris (Dog).